A 395-amino-acid chain; its full sequence is Syncephapepsin (395 aa).

The first 19 residues, 1–19 (MKFSLALLATVALATISQA), serve as a signal peptide directing secretion. A propeptide spans 20–71 (APVEKQVAGKPFQLVKNPHYQANATRAIFRAEKKYARHTAIPEQGKTIVKSA) (activation peptide). The Peptidase A1 domain occupies 89–391 (YYATVSVGTP…NQGVPEVQIA (303 aa)). Asp107 is an active-site residue. Residues Cys120 and Cys123 are joined by a disulfide bond. Residue Asp288 is part of the active site. A disulfide bridge links Cys322 with Cys355.

The protein belongs to the peptidase A1 family. As to quaternary structure, monomer.

Its function is as follows. Hydrolysis of proteins with a broad specificity. Residues recognized to be cleaved were primarily those of trypsin and chymotrypsin and Lys was the most susceptible. The sequence is that of Syncephapepsin (SPSR) from Syncephalastrum racemosum (Filamentous fungus).